Reading from the N-terminus, the 328-residue chain is Malate dehydrogenase (328 aa).

NAD(+) is bound at residue 12–18 (GAAGQIA). Substrate is bound by residues Arg93 and Arg99. NAD(+) contacts are provided by residues Asn106, Gln113, and 130 to 132 (VGN). Substrate contacts are provided by Asn132 and Arg163. His188 acts as the Proton acceptor in catalysis.

The protein belongs to the LDH/MDH superfamily. MDH type 2 family.

The catalysed reaction is (S)-malate + NAD(+) = oxaloacetate + NADH + H(+). Functionally, catalyzes the reversible oxidation of malate to oxaloacetate. This chain is Malate dehydrogenase, found in Burkholderia ambifaria (strain ATCC BAA-244 / DSM 16087 / CCUG 44356 / LMG 19182 / AMMD) (Burkholderia cepacia (strain AMMD)).